A 1960-amino-acid polypeptide reads, in one-letter code: Myosin-9 (1960 aa).

An N-acetylalanine modification is found at Ala-2. Residues 2–838 form a mediates interaction with LIMCH1 region; sequence AQQAADKYLY…RLFTKVKPLL (837 aa). An N6-acetyllysine modification is found at Lys-8. At Tyr-11 the chain carries Phosphotyrosine. The region spanning 27 to 77 is the Myosin N-terminal SH3-like domain; sequence AAKKLVWVPSDKSGFEPASLKEEVGEEAIVELVENGKKVKVNKDDIQKMNP. The region spanning 81 to 776 is the Myosin motor domain; sequence SKVEDMAELT…VLAHLEEERD (696 aa). Lys-102 is subject to N6-acetyllysine. 174-181 provides a ligand contact to ATP; sequence GESGAGKT. Residues Lys-299, Lys-435, and Lys-613 each carry the N6-acetyllysine modification. Ser-628 bears the Phosphoserine mark. The segment at 654–676 is actin-binding; that stretch reads LAKLMATLRNTNPNFVRCIIPNH. At Tyr-754 the chain carries Phosphotyrosine. The IQ domain maps to 779-808; the sequence is ITDVIIGFQACCRGYLARKAFAKRQQQLTA. A coiled-coil region spans residues 837 to 1926; it reads LLQVSRQEEE…LKNKLRRGDL (1090 aa). At Lys-850 the chain carries N6-succinyllysine. N6-acetyllysine occurs at positions 860, 975, and 1024. A compositionally biased stretch (basic and acidic residues) spans 1035–1055; it reads RLRREEKQRQELEKTRRKLEG. The segment at 1035–1057 is disordered; that stretch reads RLRREEKQRQELEKTRRKLEGDS. Ser-1114 carries the post-translational modification Phosphoserine. The segment at 1118–1137 is disordered; it reads EDLESERASRNKAEKQKRDL. Residues 1122–1137 show a composition bias toward basic and acidic residues; the sequence is SERASRNKAEKQKRDL. 8 positions are modified to N6-acetyllysine: Lys-1234, Lys-1249, Lys-1357, Lys-1392, Lys-1404, Lys-1410, Lys-1459, and Lys-1638. An N6-succinyllysine modification is found at Lys-1669. The residue at position 1714 (Ser-1714) is a Phosphoserine. Lys-1793, Lys-1802, and Lys-1845 each carry N6-acetyllysine. The interval 1877-1960 is disordered; sequence RQLEEAEEEA…ADGAEAKPAE (84 aa). An Omega-N-methylarginine modification is found at Arg-1923. Ser-1943 is subject to Phosphoserine. Over residues 1948 to 1960 the composition is skewed to basic and acidic residues; sequence DGKADGAEAKPAE.

The protein belongs to the TRAFAC class myosin-kinesin ATPase superfamily. Myosin family. In terms of assembly, myosin is a hexameric protein that consists of 2 heavy chain subunits (MHC), 2 alkali light chain subunits (MLC) and 2 regulatory light chain subunits (MLC-2). Interacts with RASIP1. Interacts with DDR1. Interacts with PDLIM2. Interacts with SVIL. Interacts with HTRA3. Interacts with Myo7a. Interacts with CFAP95. Interacts with LIMCH1; independently of the integration of MYH9 into the myosin complex. Interacts with RAB3A. Interacts with ZBED4. Interacts with S100A4; this interaction increases cell motility. (Microbial infection) Interacts with herpes simplex virus 1/HHV-1 envelope glycoprotein B. Post-translationally, ISGylated. In terms of processing, ubiquitination. As to expression, in the kidney, expressed in the glomeruli. Also expressed in leukocytes.

Its subcellular location is the cytoplasm. It is found in the cytoskeleton. The protein resides in the cell cortex. The protein localises to the cytoplasmic vesicle. It localises to the secretory vesicle. Its subcellular location is the cortical granule. It is found in the cell membrane. In terms of biological role, cellular myosin that appears to play a role in cytokinesis, cell shape, and specialized functions such as secretion and capping. Required for cortical actin clearance prior to oocyte exocytosis. Promotes cell motility in conjunction with S100A4. During cell spreading, plays an important role in cytoskeleton reorganization, focal contact formation (in the margins but not the central part of spreading cells), and lamellipodial retraction; this function is mechanically antagonized by MYH10. Functionally, (Microbial infection) Acts as a receptor for herpes simplex virus 1/HHV-1 envelope glycoprotein B. The sequence is that of Myosin-9 (MYH9) from Homo sapiens (Human).